Reading from the N-terminus, the 328-residue chain is COP9 signalosome complex subunit 6 (328 aa).

In terms of domain architecture, MPN spans 42–175 (VALHPLVILN…VSVFESVIDI (134 aa)).

The protein belongs to the peptidase M67A family. CSN6 subfamily. In terms of assembly, component of the CSN complex, composed of COPS1/GPS1, COPS2, COPS3, COPS4, COPS5, COPS6, COPS7 (COPS7A or COPS7B), COPS8 and COPS9. In the complex, it probably interacts directly with COPS2, COPS4, COPS5, COPS7 (COPS7A or COPS7B) and COPS9. Interacts with the translation initiation factor EIF3S6. Interacts weakly with RBX1. Directly interacts with COP1 and 14-3-3 protein sigma/SFN. Interacts with ERCC6.

Its subcellular location is the cytoplasm. It localises to the nucleus. Component of the COP9 signalosome complex (CSN), a complex involved in various cellular and developmental processes. The CSN complex is an essential regulator of the ubiquitin (Ubl) conjugation pathway by mediating the deneddylation of the cullin subunits of SCF-type E3 ligase complexes, leading to decrease the Ubl ligase activity of SCF-type complexes such as SCF, CSA or DDB2. The complex is also involved in phosphorylation of p53/TP53, c-jun/JUN, IkappaBalpha/NFKBIA, ITPK1 and IRF8, possibly via its association with CK2 and PKD kinases. CSN-dependent phosphorylation of TP53 and JUN promotes and protects degradation by the Ubl system, respectively. Has some glucocorticoid receptor-responsive activity. Stabilizes COP1 through reducing COP1 auto-ubiquitination and decelerating COP1 turnover rate, hence regulates the ubiquitination of COP1 targets, including SFN. In Pongo abelii (Sumatran orangutan), this protein is COP9 signalosome complex subunit 6 (COPS6).